The sequence spans 144 residues: Large ribosomal subunit protein uL11 (144 aa).

The protein belongs to the universal ribosomal protein uL11 family. In terms of assembly, part of the ribosomal stalk of the 50S ribosomal subunit. Interacts with L10 and the large rRNA to form the base of the stalk. L10 forms an elongated spine to which L12 dimers bind in a sequential fashion forming a multimeric L10(L12)X complex. One or more lysine residues are methylated.

Forms part of the ribosomal stalk which helps the ribosome interact with GTP-bound translation factors. This is Large ribosomal subunit protein uL11 from Frankia alni (strain DSM 45986 / CECT 9034 / ACN14a).